Here is a 416-residue protein sequence, read N- to C-terminus: Gamma-glutamyl phosphate reductase (416 aa).

The protein belongs to the gamma-glutamyl phosphate reductase family.

It is found in the cytoplasm. It catalyses the reaction L-glutamate 5-semialdehyde + phosphate + NADP(+) = L-glutamyl 5-phosphate + NADPH + H(+). It functions in the pathway amino-acid biosynthesis; L-proline biosynthesis; L-glutamate 5-semialdehyde from L-glutamate: step 2/2. In terms of biological role, catalyzes the NADPH-dependent reduction of L-glutamate 5-phosphate into L-glutamate 5-semialdehyde and phosphate. The product spontaneously undergoes cyclization to form 1-pyrroline-5-carboxylate. This chain is Gamma-glutamyl phosphate reductase, found in Salmonella schwarzengrund (strain CVM19633).